Consider the following 407-residue polypeptide: Probable NADPH dehydrogenase (407 aa).

Thr49 and Gln124 together coordinate FMN. Residue Tyr206 is the Proton donor of the active site. Positions 254 and 357 each coordinate FMN.

The protein belongs to the NADH:flavin oxidoreductase/NADH oxidase family. It depends on FMN as a cofactor.

It carries out the reaction A + NADPH + H(+) = AH2 + NADP(+). Oxidoreductase that binds mammalian estrogens with high affinity. The sequence is that of Probable NADPH dehydrogenase from Candida albicans (strain SC5314 / ATCC MYA-2876) (Yeast).